The sequence spans 59 residues: UPF0434 protein Sbal_1685 (59 aa).

The protein belongs to the UPF0434 family.

This is UPF0434 protein Sbal_1685 from Shewanella baltica (strain OS155 / ATCC BAA-1091).